The sequence spans 137 residues: Prostate and testis expressed protein 13 (137 aa).

A signal peptide spans 1 to 20; that stretch reads MFQKLLLSVFIILLMDVGER. A UPAR/Ly6 domain is found at 28–114; the sequence is RHCNLCSHYD…CIDRNYCNDG (87 aa). 5 cysteine pairs are disulfide-bonded: cysteine 30–cysteine 60, cysteine 33–cysteine 41, cysteine 48–cysteine 84, cysteine 87–cysteine 104, and cysteine 105–cysteine 111. Asparagine 57 carries an N-linked (GlcNAc...) asparagine glycan.

This sequence belongs to the PATE family. In terms of tissue distribution, strongly expressed in the epididymis, including the initial segment, caput, corpus and cauda regions. Weakly expressed in prostate.

Its subcellular location is the secreted. The polypeptide is Prostate and testis expressed protein 13 (Mus musculus (Mouse)).